Reading from the N-terminus, the 817-residue chain is Lon protease 1 (817 aa).

One can recognise a Lon N-terminal domain in the interval 18-216 (VPLLPLRDII…KLYELMQGEI (199 aa)). 368–375 (GPPGVGKT) provides a ligand contact to ATP. A Lon proteolytic domain is found at 604 to 785 (EDQVGIVTGL…DDVLREALVL (182 aa)). Catalysis depends on residues Ser691 and Lys734. The disordered stretch occupies residues 789 to 817 (EEFGRKPTTDGGKLGGTTELPASPAVAPA).

This sequence belongs to the peptidase S16 family. Homohexamer. Organized in a ring with a central cavity.

The protein resides in the cytoplasm. The enzyme catalyses Hydrolysis of proteins in presence of ATP.. Its function is as follows. ATP-dependent serine protease that mediates the selective degradation of mutant and abnormal proteins as well as certain short-lived regulatory proteins. Required for cellular homeostasis and for survival from DNA damage and developmental changes induced by stress. Degrades polypeptides processively to yield small peptide fragments that are 5 to 10 amino acids long. Binds to DNA in a double-stranded, site-specific manner. This Myxococcus xanthus protein is Lon protease 1.